Here is a 215-residue protein sequence, read N- to C-terminus: ATP-dependent Clp protease proteolytic subunit (215 aa).

Serine 111 serves as the catalytic Nucleophile. Histidine 136 is an active-site residue.

Belongs to the peptidase S14 family. Fourteen ClpP subunits assemble into 2 heptameric rings which stack back to back to give a disk-like structure with a central cavity, resembling the structure of eukaryotic proteasomes.

The protein resides in the cytoplasm. The catalysed reaction is Hydrolysis of proteins to small peptides in the presence of ATP and magnesium. alpha-casein is the usual test substrate. In the absence of ATP, only oligopeptides shorter than five residues are hydrolyzed (such as succinyl-Leu-Tyr-|-NHMec, and Leu-Tyr-Leu-|-Tyr-Trp, in which cleavage of the -Tyr-|-Leu- and -Tyr-|-Trp bonds also occurs).. In terms of biological role, cleaves peptides in various proteins in a process that requires ATP hydrolysis. Has a chymotrypsin-like activity. Plays a major role in the degradation of misfolded proteins. The protein is ATP-dependent Clp protease proteolytic subunit of Hamiltonella defensa subsp. Acyrthosiphon pisum (strain 5AT).